A 431-amino-acid chain; its full sequence is Histidinol dehydrogenase (431 aa).

Residues Tyr-127, Gln-189, and Asn-212 each coordinate NAD(+). Substrate-binding residues include Ser-237, Gln-259, and His-262. Zn(2+)-binding residues include Gln-259 and His-262. Active-site proton acceptor residues include Glu-326 and His-327. Residues His-327, Asp-360, Glu-414, and His-419 each contribute to the substrate site. Asp-360 provides a ligand contact to Zn(2+). His-419 contacts Zn(2+).

The protein belongs to the histidinol dehydrogenase family. Zn(2+) serves as cofactor.

It carries out the reaction L-histidinol + 2 NAD(+) + H2O = L-histidine + 2 NADH + 3 H(+). It participates in amino-acid biosynthesis; L-histidine biosynthesis; L-histidine from 5-phospho-alpha-D-ribose 1-diphosphate: step 9/9. Its function is as follows. Catalyzes the sequential NAD-dependent oxidations of L-histidinol to L-histidinaldehyde and then to L-histidine. The chain is Histidinol dehydrogenase from Xanthomonas oryzae pv. oryzae (strain KACC10331 / KXO85).